The chain runs to 776 residues: FT-interacting protein 4 (776 aa).

Residues Met-1–Pro-16 are compositionally biased toward basic and acidic residues. The interval Met-1–Val-23 is disordered. C2 domains lie at Lys-22–Tyr-142, Val-181–Phe-305, and Tyr-346–Tyr-474. Residues Asp-55, Asp-61, Asp-108, Asp-110, and Asp-115 each coordinate Ca(2+). Helical transmembrane passes span Ile-577–Trp-597, Ile-608–Leu-628, and Leu-719–Val-739.

This sequence belongs to the MCTP family. Interacts with and regulates subcellular localization and trafficking of STM. Ca(2+) serves as cofactor. As to expression, highly expressed in both vegetative and inflorescence shoot apical meristems (SAMs). Accumulates in root meristems. Observed in flowers.

The protein resides in the endoplasmic reticulum membrane. It is found in the cytoplasm. Its subcellular location is the vesicle. The protein localises to the cell membrane. It localises to the endosome membrane. The protein resides in the golgi apparatus membrane. Its function is as follows. Required for proliferation and differentiation of shoot stem cells in the shoot apical meristem (SAM), thus determining the appropriate balance between the maintenance of shoot stem cells and their differentiation into other aboveground plant parts via the control of subcellular localization and intercellular trafficking of STM in the shoot apex. Prevents intracellular trafficking of STM to the plasma membrane in cells in the peripheral shoot meristem region thus facilitating STM recycling to the nucleus to maintain stem cells. May function as a signaling molecule by regulating the trafficking of other regulators. The protein is FT-interacting protein 4 of Arabidopsis thaliana (Mouse-ear cress).